A 467-amino-acid chain; its full sequence is Argininosuccinate lyase (467 aa).

The protein belongs to the lyase 1 family. Argininosuccinate lyase subfamily.

It localises to the cytoplasm. The catalysed reaction is 2-(N(omega)-L-arginino)succinate = fumarate + L-arginine. The protein operates within amino-acid biosynthesis; L-arginine biosynthesis; L-arginine from L-ornithine and carbamoyl phosphate: step 3/3. The chain is Argininosuccinate lyase from Sinorhizobium fredii (strain NBRC 101917 / NGR234).